A 21-amino-acid polypeptide reads, in one-letter code: GLLGSLFGAGKKVACALSGLC.

Cysteine 15 and cysteine 21 are disulfide-bonded.

As to expression, expressed by the skin glands.

Its subcellular location is the secreted. Its function is as follows. Has antibacterial activity against the Gram-positive bacterium S.aureus ATCC 25923 (MIC=56 uM) and the Gram-negative bacterium E.coli ATCC 25726 (MIC=28 uM). The protein is Nigrocin-2HSa of Odorrana hosii (Hose's rock frog).